The sequence spans 184 residues: MNVKGTPTRTIWPAREGGAVWIIDQTRLPHEFVTQRLNDLGAVAHAIRAMLVRGAPLIGATAAYGVALGMAEDPSDEGLTRACQTLLATRPTAVNLRWAIEAMAESLAAVPPDQRAQAAWAKAGAICDEDVALNEAIGDHGLGIIKDLARTKGVEKGGEGPINILTHCNAGWLATVDWARPWRR.

It belongs to the eIF-2B alpha/beta/delta subunits family.

This is an uncharacterized protein from Rhodospirillum rubrum.